Reading from the N-terminus, the 198-residue chain is Molybdenum cofactor guanylyltransferase (198 aa).

GTP-binding positions include 14–16 (LAG), K27, D73, and D103. Residue D103 coordinates Mg(2+).

It belongs to the MobA family. Monomer. Mg(2+) serves as cofactor.

Its subcellular location is the cytoplasm. It catalyses the reaction Mo-molybdopterin + GTP + H(+) = Mo-molybdopterin guanine dinucleotide + diphosphate. Transfers a GMP moiety from GTP to Mo-molybdopterin (Mo-MPT) cofactor (Moco or molybdenum cofactor) to form Mo-molybdopterin guanine dinucleotide (Mo-MGD) cofactor. The protein is Molybdenum cofactor guanylyltransferase of Pseudomonas aeruginosa (strain LESB58).